A 442-amino-acid chain; its full sequence is Proline--tRNA ligase (442 aa).

Belongs to the class-II aminoacyl-tRNA synthetase family. ProS type 2 subfamily. As to quaternary structure, homodimer.

The protein resides in the cytoplasm. It catalyses the reaction tRNA(Pro) + L-proline + ATP = L-prolyl-tRNA(Pro) + AMP + diphosphate. Functionally, catalyzes the attachment of proline to tRNA(Pro) in a two-step reaction: proline is first activated by ATP to form Pro-AMP and then transferred to the acceptor end of tRNA(Pro). The protein is Proline--tRNA ligase of Brucella suis (strain ATCC 23445 / NCTC 10510).